A 279-amino-acid polypeptide reads, in one-letter code: Oxygen-dependent coproporphyrinogen-III oxidase (279 aa).

S102 is a binding site for substrate. 2 residues coordinate a divalent metal cation: H106 and H116. H116 (proton donor) is an active-site residue. 118-120 (NTR) is a substrate binding site. A divalent metal cation-binding residues include H149 and H179. Residues 244–279 (YVEFNLLYDRGTKFGLMTDGNVEAILMSLPPEVKFN) form an important for dimerization region.

It belongs to the aerobic coproporphyrinogen-III oxidase family. In terms of assembly, homodimer. It depends on a divalent metal cation as a cofactor.

The protein localises to the cytoplasm. The enzyme catalyses coproporphyrinogen III + O2 + 2 H(+) = protoporphyrinogen IX + 2 CO2 + 2 H2O. It functions in the pathway porphyrin-containing compound metabolism; protoporphyrin-IX biosynthesis; protoporphyrinogen-IX from coproporphyrinogen-III (O2 route): step 1/1. Functionally, involved in the heme biosynthesis. Catalyzes the aerobic oxidative decarboxylation of propionate groups of rings A and B of coproporphyrinogen-III to yield the vinyl groups in protoporphyrinogen-IX. This Rickettsia akari (strain Hartford) protein is Oxygen-dependent coproporphyrinogen-III oxidase.